We begin with the raw amino-acid sequence, 737 residues long: Protein kinase C epsilon type (737 aa).

The region spanning 1–117 (MVVFNGLLKI…NGSRHFEDWI (117 aa)) is the C2 domain. A Phosphoserine modification is found at Ser62. The segment at 169–220 (GHKFMATYLRQPTYCSHCRDFIWGVIGKQGYQCQVCTCVVHKRCHELIITKC) adopts a Phorbol-ester/DAG-type 1 zinc-finger fold. Residues 223-228 (LKKQET) carry the Interaction with actin motif. At Thr228 the chain carries Phosphothreonine. A Phosphoserine modification is found at Ser234. A Phorbol-ester/DAG-type 2 zinc finger spans residues 242 to 292 (PHKFGIHNYKVPTFCDHCGSLLWGLLRQGLQCKVCKMNVHRRCETNVAPNC). At Thr309 the chain carries Phosphothreonine. The interval 310-356 (PDKITNSGQRRKKLAAGAESPQPASGNSPSEDDRSKSAPTSPCDQEL) is disordered. Ser316, Ser329, Ser337, and Ser346 each carry phosphoserine. At Thr349 the chain carries Phosphothreonine. At Ser350 the chain carries Phosphoserine; by MAPK11 and MAPK14. Ser368 and Ser388 each carry phosphoserine. Residues 369–398 (FDNRGEEHRASSSTDGQLASPGENGEVRQG) form a disordered region. Residues 408–668 (FNFIKVLGKG…EDAIKQHPFF (261 aa)) form the Protein kinase domain. Residues 414 to 422 (LGKGSFGKV) and Lys437 contribute to the ATP site. Asp532 serves as the catalytic Proton acceptor. Residue Thr566 is modified to Phosphothreonine; by PDPK1. One can recognise an AGC-kinase C-terminal domain in the interval 669 to 737 (KEIDWVLLEQ…FSYFGEDLMP (69 aa)). Thr703 and Thr710 each carry phosphothreonine. Phosphoserine is present on Ser729.

The protein belongs to the protein kinase superfamily. AGC Ser/Thr protein kinase family. PKC subfamily. Forms a ternary complex with TRIM63 and RACK1/GN2BL1. Can form a complex with PDLIM5 and N-type calcium channel. Interacts with COPB1. Interacts with DGKQ. Interacts with STAT3. Interacts with YWHAB. Interacts with HSP90AB1; promotes functional activation in a heat shock-dependent manner. Interacts (via phorbol-ester/DAG-type 2 domain) with PRPH and VIM. Interacts with NLRP5/MATER. Phosphorylation on Thr-566 by PDPK1 triggers autophosphorylation on Ser-729. Phosphorylation in the hinge domain at Ser-350 by MAPK11 or MAPK14, Ser-346 by GSK3B and Ser-368 by autophosphorylation is required for interaction with YWHAB. In response to growth factors, phosphorylated at Thr-703 and Ser-729 by the mTORC2 complex, promoting autophosphorylation and activation of PRKCE.

It is found in the cytoplasm. The protein resides in the cytoskeleton. The protein localises to the cell membrane. It localises to the perinuclear region. Its subcellular location is the nucleus. The enzyme catalyses L-seryl-[protein] + ATP = O-phospho-L-seryl-[protein] + ADP + H(+). The catalysed reaction is L-threonyl-[protein] + ATP = O-phospho-L-threonyl-[protein] + ADP + H(+). Novel PKCs (PRKCD, PRKCE, PRKCH and PRKCQ) are calcium-insensitive, but activated by diacylglycerol (DAG) and phosphatidylserine. Three specific sites; Thr-566 (activation loop of the kinase domain), Thr-710 (turn motif) and Ser-729 (hydrophobic region), need to be phosphorylated for its full activation. In terms of biological role, calcium-independent, phospholipid- and diacylglycerol (DAG)-dependent serine/threonine-protein kinase that plays essential roles in the regulation of multiple cellular processes linked to cytoskeletal proteins, such as cell adhesion, motility, migration and cell cycle, functions in neuron growth and ion channel regulation, and is involved in immune response, cancer cell invasion and regulation of apoptosis. Mediates cell adhesion to the extracellular matrix via integrin-dependent signaling, by mediating angiotensin-2-induced activation of integrin beta-1 (ITGB1) in cardiac fibroblasts. Phosphorylates MARCKS, which phosphorylates and activates PTK2/FAK, leading to the spread of cardiomyocytes. Involved in the control of the directional transport of ITGB1 in mesenchymal cells by phosphorylating vimentin (VIM), an intermediate filament (IF) protein. In epithelial cells, associates with and phosphorylates keratin-8 (KRT8), which induces targeting of desmoplakin at desmosomes and regulates cell-cell contact. Phosphorylates IQGAP1, which binds to CDC42, mediating epithelial cell-cell detachment prior to migration. During cytokinesis, forms a complex with YWHAB, which is crucial for daughter cell separation, and facilitates abscission by a mechanism which may implicate the regulation of RHOA. In cardiac myocytes, regulates myofilament function and excitation coupling at the Z-lines, where it is indirectly associated with F-actin via interaction with COPB1. During endothelin-induced cardiomyocyte hypertrophy, mediates activation of PTK2/FAK, which is critical for cardiomyocyte survival and regulation of sarcomere length. Plays a role in the pathogenesis of dilated cardiomyopathy via persistent phosphorylation of troponin I (TNNI3). Involved in nerve growth factor (NFG)-induced neurite outgrowth and neuron morphological change independently of its kinase activity, by inhibition of RHOA pathway, activation of CDC42 and cytoskeletal rearrangement. May be involved in presynaptic facilitation by mediating phorbol ester-induced synaptic potentiation. Phosphorylates gamma-aminobutyric acid receptor subunit gamma-2 (GABRG2), which reduces the response of GABA receptors to ethanol and benzodiazepines and may mediate acute tolerance to the intoxicating effects of ethanol. Upon PMA treatment, phosphorylates the capsaicin- and heat-activated cation channel TRPV1, which is required for bradykinin-induced sensitization of the heat response in nociceptive neurons. Is able to form a complex with PDLIM5 and N-type calcium channel, and may enhance channel activities and potentiates fast synaptic transmission by phosphorylating the pore-forming alpha subunit CACNA1B (CaV2.2). Downstream of TLR4, plays an important role in the lipopolysaccharide (LPS)-induced immune response by phosphorylating and activating TICAM2/TRAM, which in turn activates the transcription factor IRF3 and subsequent cytokines production. In differentiating erythroid progenitors, is regulated by EPO and controls the protection against the TNFSF10/TRAIL-mediated apoptosis, via BCL2. May be involved in the regulation of the insulin-induced phosphorylation and activation of AKT1. Phosphorylates NLRP5/MATER and may thereby modulate AKT pathway activation in cumulus cells. Phosphorylates and activates LRRK1, which phosphorylates RAB proteins involved in intracellular trafficking. The chain is Protein kinase C epsilon type (Prkce) from Rattus norvegicus (Rat).